The primary structure comprises 352 residues: Sulfate-binding protein (352 aa).

An N-terminal signal peptide occupies residues 1-40; that stretch reads MARSAFGWGFSVIAVLMVGSITACNTTTTTEPGQGENASQ.

The protein belongs to the prokaryotic sulfate-binding protein family.

The protein localises to the periplasm. Its function is as follows. This protein specifically binds sulfate and is involved in its transmembrane transport. In Synechocystis sp. (strain ATCC 27184 / PCC 6803 / Kazusa), this protein is Sulfate-binding protein (sbpA).